A 660-amino-acid chain; its full sequence is DNA mismatch repair protein MutL (660 aa).

A compositionally biased stretch (polar residues) spans 341 to 355; it reads SFQSDGAPPTQQLSS. Disordered regions lie at residues 341–362 and 378–398; these read SFQS…EKAE and ALSP…RVER. Residues 385–398 show a composition bias toward basic and acidic residues; the sequence is ELPKSPERSERVER.

It belongs to the DNA mismatch repair MutL/HexB family.

Its function is as follows. This protein is involved in the repair of mismatches in DNA. It is required for dam-dependent methyl-directed DNA mismatch repair. May act as a 'molecular matchmaker', a protein that promotes the formation of a stable complex between two or more DNA-binding proteins in an ATP-dependent manner without itself being part of a final effector complex. In Heliobacterium modesticaldum (strain ATCC 51547 / Ice1), this protein is DNA mismatch repair protein MutL.